The chain runs to 88 residues: Large ribosomal subunit protein bL31 (88 aa).

The segment at 67–88 is disordered; sequence MGSVDNATSEKKSATDETSKES. The segment covering 74-88 has biased composition (basic and acidic residues); the sequence is TSEKKSATDETSKES.

Belongs to the bacterial ribosomal protein bL31 family. Type A subfamily. Part of the 50S ribosomal subunit.

In terms of biological role, binds the 23S rRNA. This chain is Large ribosomal subunit protein bL31, found in Synechococcus sp. (strain CC9311).